The sequence spans 271 residues: NADPH-dependent 7-cyano-7-deazaguanine reductase (271 aa).

Substrate is bound at residue 81 to 83 (IES). 83-84 (SK) serves as a coordination point for NADPH. Catalysis depends on Cys177, which acts as the Thioimide intermediate. Asp184 serves as the catalytic Proton donor. 216–217 (HE) serves as a coordination point for substrate. 245–246 (RG) contributes to the NADPH binding site.

This sequence belongs to the GTP cyclohydrolase I family. QueF type 2 subfamily. In terms of assembly, homodimer.

It is found in the cytoplasm. It carries out the reaction 7-aminomethyl-7-carbaguanine + 2 NADP(+) = 7-cyano-7-deazaguanine + 2 NADPH + 3 H(+). It participates in tRNA modification; tRNA-queuosine biosynthesis. Catalyzes the NADPH-dependent reduction of 7-cyano-7-deazaguanine (preQ0) to 7-aminomethyl-7-deazaguanine (preQ1). The protein is NADPH-dependent 7-cyano-7-deazaguanine reductase of Xanthomonas axonopodis pv. citri (strain 306).